The primary structure comprises 194 residues: Lectin-C (194 aa).

A signal peptide spans 1 to 26; it reads MKRSNSIAVMLVLVLSSLMLLLPVEG. Residues 27 to 44 constitute a propeptide, removed in mature form; the sequence is QGHEGHGVGEILLMGKLG. 3 consecutive Chitin-binding type-1 domains span residues 45-86, 87-127, and 128-168; these read APVC…QCDY, NRCG…QCSY, and WRCG…QCDL. Cystine bridges form between Cys-48/Cys-63, Cys-57/Cys-69, Cys-62/Cys-76, Cys-80/Cys-84, Cys-89/Cys-104, Cys-98/Cys-110, Cys-103/Cys-117, Cys-121/Cys-125, Cys-130/Cys-145, Cys-139/Cys-151, Cys-144/Cys-158, and Cys-162/Cys-166. The propeptide at 171-194 is removed in mature form; that stretch reads LLPSPLRRIIAIRKLKANLANMLS.

In terms of assembly, homodimer. The homodimers are asymmetric; formed in a 'head-to-tail' fashion via hydrophobic interactions between aromatic residues of the carbohydrate-binding sites of each subunit.

In terms of biological role, N-acetyl-D-glucosamine binding lectin. Almost no hemagglutinating activity towards human erythrocytes. Low mitogenic activity towards human peripheral blood lymphocytes. The protein is Lectin-C of Phytolacca americana (American pokeweed).